A 570-amino-acid polypeptide reads, in one-letter code: uncharacterized protein (570 aa).

Over residues 1 to 15 (MTESIISSRTASISS) the composition is skewed to low complexity. The interval 1 to 34 (MTESIISSRTASISSKEGYEIRQGSTDSSSLDLE) is disordered. At Ser14 the chain carries Phosphoserine. The next 12 membrane-spanning stretches (helical) occupy residues 96–116 (WKLYIYLLLMLGFLDMMLFIG), 141–161 (NLNTLFYVGYIVGQFPGHYIM), 163–183 (TFPLGKFVGLVTFSWSVIVFL), 198–218 (FFLGFTESCLLPAMEATMGMF), 229–249 (PVFWISCLSCGIPAGFIAYGL), 261–281 (LFMIITGGITFFLSIFLFFYY), 328–348 (PITWLFTFAAFTLMLSNNLAY), 369–389 (VALAGYNTVSAIIATFAMYLI), 397–417 (AMFWMLPSITGGIAFVALPWS), 423–443 (LATMIIASDFGITYIIALGWT), 457–477 (GLMFMVGYAIANIISPQLWQS), and 485–505 (PAWIVQIVVAWFVTPIIYLVA).

It belongs to the major facilitator superfamily. Allantoate permease family.

The protein localises to the endoplasmic reticulum. It is found in the membrane. This is an uncharacterized protein from Schizosaccharomyces pombe (strain 972 / ATCC 24843) (Fission yeast).